Reading from the N-terminus, the 325-residue chain is Delta(1)-pyrroline-2-carboxylate reductase (325 aa).

This sequence belongs to the ornithine cyclodeaminase/mu-crystallin family.

The enzyme catalyses L-proline + NAD(+) = 1-pyrroline-2-carboxylate + NADH + H(+). The catalysed reaction is L-proline + NADP(+) = 1-pyrroline-2-carboxylate + NADPH + H(+). Its function is as follows. Catalyzes the reduction of Delta(1)-pyrroline-2-carboxylate (Pyr2C) to L-proline, using preferentially NADPH over NADH as the electron donor. Is likely involved in a degradation pathway that converts trans-3-hydroxy-L-proline (t3LHyp) to L-proline. This is Delta(1)-pyrroline-2-carboxylate reductase from Bacillus thuringiensis subsp. konkukian (strain 97-27).